A 559-amino-acid chain; its full sequence is Cytochrome P450 86B1 (559 aa).

A helical membrane pass occupies residues 31–51 (FLLRDVQILELLIAIFVFVAI). A heme-binding site is contributed by Cys-488.

It belongs to the cytochrome P450 family. It depends on heme as a cofactor. In terms of tissue distribution, expressed in roots endodermis, anthers, stigmas, stomata of young pedicels of inflorescences, the placenta region of siliques, at the level of the hilum in matures seeds, at the junction of siliques to pedicels where abscission of floral parts takes place and in nectary glands.

It localises to the endoplasmic reticulum membrane. Its function is as follows. Involved in very long chain fatty acids (VLCFA) omega-hydroxylation. Required for the synthesis of saturated VLCFA alpha, omega-bifunctional suberin monomers. The chain is Cytochrome P450 86B1 (CYP86B1) from Arabidopsis thaliana (Mouse-ear cress).